The primary structure comprises 173 residues: dCTP deaminase, dUMP-forming (173 aa).

DCTP is bound by residues 93–98 (RSSIGR), D111, 119–121 (TLE), Q138, and Y151. The active-site Proton donor/acceptor is E121.

Belongs to the dCTP deaminase family. In terms of assembly, homotrimer.

It catalyses the reaction dCTP + 2 H2O = dUMP + NH4(+) + diphosphate. It functions in the pathway pyrimidine metabolism; dUMP biosynthesis; dUMP from dCTP: step 1/1. In terms of biological role, bifunctional enzyme that catalyzes both the deamination of dCTP to dUTP and the hydrolysis of dUTP to dUMP without releasing the toxic dUTP intermediate. This chain is dCTP deaminase, dUMP-forming, found in Cytophaga hutchinsonii (strain ATCC 33406 / DSM 1761 / CIP 103989 / NBRC 15051 / NCIMB 9469 / D465).